Reading from the N-terminus, the 80-residue chain is Acyl carrier protein (80 aa).

The region spanning 4 to 79 is the Carrier domain; that stretch reads EAILEKVRSI…DAVKYIEEKQ (76 aa). Ser-39 is subject to O-(pantetheine 4'-phosphoryl)serine.

It belongs to the acyl carrier protein (ACP) family. Post-translationally, 4'-phosphopantetheine is transferred from CoA to a specific serine of apo-ACP by AcpS. This modification is essential for activity because fatty acids are bound in thioester linkage to the sulfhydryl of the prosthetic group.

It is found in the cytoplasm. The protein operates within lipid metabolism; fatty acid biosynthesis. Carrier of the growing fatty acid chain in fatty acid biosynthesis. The polypeptide is Acyl carrier protein (Prochlorococcus marinus (strain NATL1A)).